Reading from the N-terminus, the 2850-residue chain is Mucin-6 (2850 aa).

The first 22 residues, 1–22 (MLRVRQLLLLLLFRGPLIDAGA), serve as a signal peptide directing secretion. The 214-residue stretch at 43–256 (GWCSTWGAGH…KLDDPNEICA (214 aa)) folds into the VWFD 1 domain. Disulfide bonds link cysteine 45/cysteine 218 and cysteine 67/cysteine 255. The N-linked (GlcNAc...) asparagine glycan is linked to asparagine 94. The tract at residues 160-183 (HLTEGQGGDEVGTPGTLKQESKGS) is disordered. N-linked (GlcNAc...) asparagine glycosylation is present at asparagine 310. Positions 344 to 399 (CPANQVYQECGEVCIKTCSNPQHSCSSPCTFGCFCPHGTLLDDISGNQSCVPVNQC) constitute a TIL 1 domain. The 185-residue stretch at 437–621 (GHCSLEGGSF…ALEREMDPCS (185 aa)) folds into the VWFD 2 domain. 2 disulfide bridges follow: cysteine 439–cysteine 575 and cysteine 461–cysteine 620. Residues asparagine 528 and asparagine 701 are each glycosylated (N-linked (GlcNAc...) asparagine). The TIL 2 domain occupies 806–869 (CPEPKTFQSC…DGQCVPAEEC (64 aa)). The VWFD 3 domain maps to 908-1080 (STCVLYGEGH…NSWKESPLCG (173 aa)). Intrachain disulfides connect cysteine 910-cysteine 1044, cysteine 932-cysteine 1079, cysteine 941-cysteine 1041, and cysteine 959-cysteine 966. 2 N-linked (GlcNAc...) asparagine glycosylation sites follow: asparagine 1017 and asparagine 1221. Low complexity predominate over residues 1263–1281 (EFHSSTSANTPVAPSYLPG). Disordered stretches follow at residues 1263 to 1363 (EFHS…TAEL), 1377 to 1400 (GMST…THRV), 1466 to 1504 (VSAN…PSTT), 1580 to 1600 (TPPV…RTTH), 1626 to 1650 (IASP…TSSV), 1705 to 1813 (TKTS…SLST), 1877 to 1942 (QTKS…RTTH), 1968 to 1992 (IASP…TSSV), 2049 to 2119 (TSFS…PSTT), 2219 to 2254 (QTKS…TTNS), 2276 to 2295 (IAHT…SSTT), 2306 to 2338 (EQST…SPTD), 2370 to 2473 (TTPP…FRTP), 2511 to 2621 (PTNP…TFVS), 2634 to 2674 (PTIH…KSTT), and 2692 to 2761 (STMG…GTCS). Positions 1294-1312 (EELTVWTTPKESTVSSGEY) are enriched in polar residues. The span at 1345–1363 (TSKPTASSLSSSTKTTAEL) shows a compositional bias: low complexity. Composition is skewed to polar residues over residues 1378 to 1399 (MSTS…TTHR) and 1466 to 1484 (VSAN…PVVH). Repeat copies occupy residues 1440–1555 (TQNL…PTTE), 1556–1712 (GLNT…FSTD), 1713–1885 (RTST…FSTD), 1886–2054 (RTSA…FSTD), 2055–2227 (RTST…FSTD), 2228–2396 (RTST…FSTE), 2397–2563 (RTST…FPTT), and 2564–2671 (RTST…FSSK). The approximate repeats stretch occupies residues 1440–2671 (TQNLFSTAPH…VPTFSSFSSK (1232 aa)). Positions 1485–1504 (TTSGTSSSPQTPRTTHPSTT) are enriched in low complexity. Polar residues predominate over residues 1626 to 1639 (IASPTPSAPQTSLA). Residues 1705–1719 (TKTSFSTDRTSTSTS) are compositionally biased toward low complexity. Residues 1720-1757 (APHLSETSAVTAHQSTPTAVSANSIKPTMSSTGTPVVH) show a composition bias toward polar residues. Over residues 1758-1777 (TTSGTTSSPQTPRTTHPSTT) the composition is skewed to low complexity. Polar residues predominate over residues 1778–1813 (VAVSGTVHTTGLPSGTSVHTTTNFPTHSGPQSSLST). A compositionally biased stretch (low complexity) spans 1893-1942 (SQPSTVTPTQSTPIPATTNSLMTTGGLTGTPPVHTTSGTTSSPQTPRTTH). Polar residues predominate over residues 1968 to 1981 (IASPTPSAPQTSLA). Residues 2049 to 2061 (TSFSTDRTSTSTS) show a composition bias toward low complexity. Residues 2062–2099 (APHLSETSAVTAHQSTPTAVSANSIKPTMSSTGTPVVH) are compositionally biased toward polar residues. The span at 2100 to 2119 (TTSGTTSSPQTPRTTHPSTT) shows a compositional bias: low complexity. Residues 2227-2238 (DRTSTPHLSQSS) show a composition bias toward polar residues. The segment covering 2282–2295 (TTHSLPTAASSSTT) has biased composition (low complexity). Over residues 2370–2384 (TTPPNTSTPVTHSTS) the composition is skewed to low complexity. The segment covering 2385–2429 (ATTEAQGSFSTERTSTSYLSHPSSTTVHQSTAGPVITSIKSTMGV) has biased composition (polar residues). A compositionally biased stretch (low complexity) spans 2436–2456 (HTTSGTTSSPQTPHSTHPIST). Polar residues predominate over residues 2457-2466 (AAISRTTGIS). A compositionally biased stretch (low complexity) spans 2516 to 2533 (SVSSASTSRPLSTSLPTT). Over residues 2534–2560 (IKGTGTPQTPVSDINTTSATTQAHSSF) the composition is skewed to polar residues. The span at 2561–2584 (PTTRTSTSHLSLPSSMTSTLTPAS) shows a compositional bias: low complexity. Residues 2585–2601 (RSASTLQYTPTPSSVSH) show a composition bias toward polar residues. Residues 2639–2674 (TPTPSSRPTSSTGLLSTSKTTSHVPTFSSFSSKSTT) are compositionally biased toward low complexity. The segment covering 2692 to 2725 (STMGMTNLPSSGSPDINHTTRPPGSSPLPTSAFL) has biased composition (polar residues). The segment covering 2726-2759 (SRSTSPTGSSSPSTPVSSSNPDSSVSSPPSHPGT) has biased composition (low complexity). 4 disulfides stabilise this stretch: cysteine 2760–cysteine 2807, cysteine 2774–cysteine 2821, cysteine 2783–cysteine 2841, and cysteine 2787–cysteine 2843. The CTCK domain maps to 2760-2849 (CSLQEEEHQI…SCVCSPLQCK (90 aa)).

As to quaternary structure, multimer; disulfide-linked. Post-translationally, O-glycosylated. As to expression, expressed in stomach, duodenum and small intestine.

Its subcellular location is the secreted. Functionally, may provide a mechanism for modulation of the composition of the protective mucus layer related to acid secretion or the presence of bacteria and noxious agents in the lumen. Plays an important role in the cytoprotection of epithelial surfaces and are used as tumor markers in a variety of cancers. May play a role in epithelial organogenesis. The sequence is that of Mucin-6 (Muc6) from Mus musculus (Mouse).